The primary structure comprises 110 residues: Class I hydrophobin Po.HYD (110 aa).

Positions Met1–Thr27 are cleaved as a signal peptide. 4 disulfide bridges follow: Cys35/Cys91, Cys42/Cys85, Cys43/Cys75, and Cys92/Cys105.

Belongs to the fungal hydrophobin family. Self-assembles to form functional amyloid fibrils called rodlets. Self-assembly into fibrillar rodlets occurs spontaneously at hydrophobic:hydrophilic interfaces and the rodlets further associate laterally to form amphipathic monolayers.

It is found in the secreted. It localises to the cell wall. Functionally, aerial growth, conidiation, and dispersal of filamentous fungi in the environment rely upon a capability of their secreting small amphipathic proteins called hydrophobins (HPBs) with low sequence identity. Class I can self-assemble into an outermost layer of rodlet bundles on aerial cell surfaces, conferring cellular hydrophobicity that supports fungal growth, development and dispersal; whereas Class II form highly ordered films at water-air interfaces through intermolecular interactions but contribute nothing to the rodlet structure. In Pleurotus ostreatus (Oyster mushroom), this protein is Class I hydrophobin Po.HYD.